Consider the following 238-residue polypeptide: MRPAGRAPQQVRPLTLTRHYTKHAEGSVLVEFGDTKVLCTATVEEGVPRFLKGQGQGWITAEYGMLPRSTHSRNAREAAKGKQGGRTLEIQRLIARSLRAAVDLKKLGEFTITLDCDVLQADGGTRTASISGACVALADALNALVANGKLKANPMKGLVAAVSVGIVNGEALCDLEYVEDSAAETDMNVVMMEDGRMIEVQGTAEGEPFSHDELLALLALARGGIDTIFQAQKAALAD.

Residues arginine 86 and 124-126 (GTR) each bind phosphate.

It belongs to the RNase PH family. As to quaternary structure, homohexameric ring arranged as a trimer of dimers.

It carries out the reaction tRNA(n+1) + phosphate = tRNA(n) + a ribonucleoside 5'-diphosphate. In terms of biological role, phosphorolytic 3'-5' exoribonuclease that plays an important role in tRNA 3'-end maturation. Removes nucleotide residues following the 3'-CCA terminus of tRNAs; can also add nucleotides to the ends of RNA molecules by using nucleoside diphosphates as substrates, but this may not be physiologically important. Probably plays a role in initiation of 16S rRNA degradation (leading to ribosome degradation) during starvation. This Serratia proteamaculans (strain 568) protein is Ribonuclease PH.